A 180-amino-acid chain; its full sequence is uncharacterized protein (180 aa).

2 coiled-coil regions span residues 3 to 82 and 95 to 179; these read LKSL…QKIA and REYE…EKYG.

This is an uncharacterized protein from Aquifex aeolicus (strain VF5).